Consider the following 496-residue polypeptide: Apolipoprotein N-acyltransferase (496 aa).

A run of 6 helical transmembrane segments spans residues 6–26 (IICF…FFIP), 50–70 (FGYL…SIGV), 77–97 (FWWA…FFIS), 114–134 (LIFC…CTGL), 148–168 (ILIQ…VIYI), and 183–203 (LKIL…YGAM). Positions 220–464 (VQPSIPQTAK…QGLIPQKLTT (245 aa)) constitute a CN hydrolase domain. The active-site Proton acceptor is the E259. Residue K322 is part of the active site. The active-site Nucleophile is C372. A helical membrane pass occupies residues 474-494 (FAMLLPIVFILLIHYLLSLIF).

This sequence belongs to the CN hydrolase family. Apolipoprotein N-acyltransferase subfamily.

It localises to the cell inner membrane. It catalyses the reaction N-terminal S-1,2-diacyl-sn-glyceryl-L-cysteinyl-[lipoprotein] + a glycerophospholipid = N-acyl-S-1,2-diacyl-sn-glyceryl-L-cysteinyl-[lipoprotein] + a 2-acyl-sn-glycero-3-phospholipid + H(+). Its pathway is protein modification; lipoprotein biosynthesis (N-acyl transfer). Functionally, catalyzes the phospholipid dependent N-acylation of the N-terminal cysteine of apolipoprotein, the last step in lipoprotein maturation. The polypeptide is Apolipoprotein N-acyltransferase (Rickettsia typhi (strain ATCC VR-144 / Wilmington)).